A 230-amino-acid chain; its full sequence is Transmembrane 4 L6 family member 20 (230 aa).

The Lumenal portion of the chain corresponds to 1-11; sequence MTCCEGWTSCN. The chain crosses the membrane as a helical span at residues 12–32; it reads GFSLLVLLLLGVTLNAIPLIL. Topologically, residues 33-44 are cytoplasmic; it reads NFVDEDQFFENP. Residues 45 to 65 traverse the membrane as a helical segment; the sequence is ISCFEWWFPGIIGAGVMAIPA. Residues 66–83 are Lumenal-facing; sequence TTMSLAARKRACCNNKTG. Residues 84–104 traverse the membrane as a helical segment; that stretch reads MFLSSLLNAITVIGAAYCLLV. At 105–185 the chain is on the cytoplasmic side; it reads SIQALAEGPL…HFNSIENQHR (81 aa). The chain crosses the membrane as a helical span at residues 186 to 206; it reads IIHFSVFLGLLLVGILEILFG. Residues 207 to 230 lie on the Lumenal side of the membrane; the sequence is LSQIIIGFFGCLCGGVSNGRSQIV.

The protein belongs to the L6 tetraspanin family. Post-translationally, glycosylated at Asn-132 in presence of ceramide which inverts the orientation of TM4SF20 in membranes exposing these residues to the endoplasmic reticulum lumen. In terms of processing, cleaved by signal peptidase at Ser-14 but the peptide does not act as a signal peptide. Cleavage is inhibited by ceramide which inverts the orientation of TM4SF20 in membranes exposing the N-terminus to the cytosol and not to the endoplasmic reticulum lumen.

The protein localises to the membrane. It localises to the endoplasmic reticulum membrane. In terms of biological role, polytopic transmembrane protein. Inhibits regulated intramembrane proteolysis (RIP) of CREB3L1, inhibiting its activation and the induction of collagen synthesis. In response to ceramide, which alters TM4SF20 membrane topology, stimulates RIP activation of CREB3L1. Ceramide reverses the direction through which transmembrane helices are translocated into the endoplasmic reticulum membrane during translation of TM4SF20, this mechanism is called 'regulated alternative translocation' (RAT) and regulates the function of the transmembrane protein. The polypeptide is Transmembrane 4 L6 family member 20 (TM4SF20) (Bos taurus (Bovine)).